Consider the following 184-residue polypeptide: Dual specificity protein phosphatase 22 (184 aa).

Residue G2 is the site of N-myristoyl glycine attachment. A Tyrosine-protein phosphatase domain is found at 4 to 144 (GMNKILPGLY…LQEFEKHEVH (141 aa)). The residue at position 58 (S58) is a Phosphoserine. C88 (phosphocysteine intermediate) is an active-site residue. The a protein site is built by L89, A90, V92, S93, and R94.

The protein belongs to the protein-tyrosine phosphatase family. Non-receptor class dual specificity subfamily. As to quaternary structure, monomer. Interacts with LCK; the interaction is direct. Interacts with UBR2; the interaction is direct. In terms of processing, myristoylation regulates subcellular location, and is necessary for activation of JNK. Ubiquitous. Highest expression seen in heart, placenta, lung, liver, kidney and pancreas.

The protein resides in the cytoplasm. The enzyme catalyses O-phospho-L-tyrosyl-[protein] + H2O = L-tyrosyl-[protein] + phosphate. It catalyses the reaction O-phospho-L-seryl-[protein] + H2O = L-seryl-[protein] + phosphate. The catalysed reaction is O-phospho-L-threonyl-[protein] + H2O = L-threonyl-[protein] + phosphate. Functionally, dual specificity phosphatase; can dephosphorylate both phosphotyrosine and phosphoserine or phosphothreonine residues. Activates the JNK signaling pathway. Inhibits T-cell receptor signaling and T-cell mediated immune responses, acting, at least in part, by inducing degradation of E3 ubiquitin ligase UBR2. Dephosphorylates and thereby induces 'Lys-48'-linked ubiquitination of UBR2, leading to proteasomal degradation of UBR2. Dephosphorylates and thereby inactivates tyrosine kinase LCK. Inhibits UBR2-mediated 'Lys-63'-linked ubiquitination of LCK. May play a role in B-cell receptor (BCR) signaling and B-cell function. This chain is Dual specificity protein phosphatase 22 (DUSP22), found in Homo sapiens (Human).